Consider the following 395-residue polypeptide: Phosphopentomutase (395 aa).

Mn(2+) is bound by residues Asp13, Asp288, His293, Asp329, His330, and His341.

Belongs to the phosphopentomutase family. It depends on Mn(2+) as a cofactor.

It is found in the cytoplasm. It carries out the reaction 2-deoxy-alpha-D-ribose 1-phosphate = 2-deoxy-D-ribose 5-phosphate. The enzyme catalyses alpha-D-ribose 1-phosphate = D-ribose 5-phosphate. Its pathway is carbohydrate degradation; 2-deoxy-D-ribose 1-phosphate degradation; D-glyceraldehyde 3-phosphate and acetaldehyde from 2-deoxy-alpha-D-ribose 1-phosphate: step 1/2. In terms of biological role, isomerase that catalyzes the conversion of deoxy-ribose 1-phosphate (dRib-1-P) and ribose 1-phosphate (Rib-1-P) to deoxy-ribose 5-phosphate (dRib-5-P) and ribose 5-phosphate (Rib-5-P), respectively. The protein is Phosphopentomutase of Agathobacter rectalis (strain ATCC 33656 / DSM 3377 / JCM 17463 / KCTC 5835 / VPI 0990) (Eubacterium rectale).